We begin with the raw amino-acid sequence, 156 residues long: 6,7-dimethyl-8-ribityllumazine synthase (156 aa).

Residues Phe-22, 56 to 58, and 80 to 82 contribute to the 5-amino-6-(D-ribitylamino)uracil site; these read AME and AVI. 85–86 contributes to the (2S)-2-hydroxy-3-oxobutyl phosphate binding site; that stretch reads ET. The active-site Proton donor is the His-88. Phe-113 is a binding site for 5-amino-6-(D-ribitylamino)uracil. Arg-127 provides a ligand contact to (2S)-2-hydroxy-3-oxobutyl phosphate.

This sequence belongs to the DMRL synthase family.

It carries out the reaction (2S)-2-hydroxy-3-oxobutyl phosphate + 5-amino-6-(D-ribitylamino)uracil = 6,7-dimethyl-8-(1-D-ribityl)lumazine + phosphate + 2 H2O + H(+). The protein operates within cofactor biosynthesis; riboflavin biosynthesis; riboflavin from 2-hydroxy-3-oxobutyl phosphate and 5-amino-6-(D-ribitylamino)uracil: step 1/2. Functionally, catalyzes the formation of 6,7-dimethyl-8-ribityllumazine by condensation of 5-amino-6-(D-ribitylamino)uracil with 3,4-dihydroxy-2-butanone 4-phosphate. This is the penultimate step in the biosynthesis of riboflavin. In Kosmotoga olearia (strain ATCC BAA-1733 / DSM 21960 / TBF 19.5.1), this protein is 6,7-dimethyl-8-ribityllumazine synthase.